The chain runs to 200 residues: Prophage tail fiber assembly protein homolog TfaE (200 aa).

Belongs to the tfa family.

The protein is Prophage tail fiber assembly protein homolog TfaE (tfaE) of Escherichia coli (strain K12).